We begin with the raw amino-acid sequence, 315 residues long: Zinc transport protein ZntB (315 aa).

The Cytoplasmic segment spans residues 1–250 (MGFMIEHWDF…RDEKTNKNSY (250 aa)). Residues 251-271 (LFTLVATIFLPTSFLTGLLGI) traverse the membrane as a helical segment. Topologically, residues 272–282 (NIGGMPGVESS) are periplasmic. Residues 283-303 (MAFTWFCIALIVIFGLEWLLF) form a helical membrane-spanning segment. Residues 304–315 (KRLGFTNKTDDE) are Cytoplasmic-facing.

The protein belongs to the CorA metal ion transporter (MIT) (TC 1.A.35) family. In terms of assembly, homopentamer. Can assemble pentamers in the absence of the transmembrane regions.

It localises to the cell inner membrane. The catalysed reaction is Zn(2+)(out) + H(+)(out) = Zn(2+)(in) + H(+)(in). Zinc transporter. Acts as a Zn(2+):proton symporter, which likely mediates zinc ion uptake. The polypeptide is Zinc transport protein ZntB (Vibrio parahaemolyticus serotype O3:K6 (strain RIMD 2210633)).